Consider the following 589-residue polypeptide: TAF5-like RNA polymerase II p300/CBP-associated factor-associated factor 65 kDa subunit 5L (589 aa).

A compositionally biased stretch (polar residues) spans 211 to 221 (ASGSSSRSENN). The interval 211–230 (ASGSSSRSENNGLEPPDMPS) is disordered. WD repeat units follow at residues 266 to 305 (NTEQ…LKSE), 340 to 379 (GHCG…NTVL), 382 to 421 (GHAY…PLRI), 424 to 463 (GHLA…SVRL), 466 to 505 (GHRG…LYKE), and 508 to 547 (GHTD…CSAP).

It belongs to the WD repeat TAF5 family. In terms of assembly, the PCAF complex is composed of a number of TBP-associated factors (TAFS), such as TAF5, TAF5L, TAF6, TAF6L, TAF9, TAF10 and TAF12, PCAF, and also PCAF-associated factors (PAFs), such as TADA2L/ADA2, TADA3L/ADA3 and SPT3. Component of the STAGA transcription coactivator-HAT complex, at least composed of SUPT3H, GCN5L2, TAF5L, TAF6L, SUPT7L, TADA3L, TAD1L, TAF10, TAF12, TRRAP and TAF9.

The protein localises to the nucleus. Its function is as follows. Functions as a component of the PCAF complex. The PCAF complex is capable of efficiently acetylating histones in a nucleosomal context. The PCAF complex could be considered as the human version of the yeast SAGA complex. With TAF6L, acts as an epigenetic regulator essential for somatic reprogramming. Regulates target genes through H3K9ac deposition and MYC recruitment which trigger MYC regulatory network to orchestrate gene expression programs to control embryonic stem cell state. The sequence is that of TAF5-like RNA polymerase II p300/CBP-associated factor-associated factor 65 kDa subunit 5L from Homo sapiens (Human).